Here is a 167-residue protein sequence, read N- to C-terminus: uncharacterized protein (167 aa).

2 helical membrane-spanning segments follow: residues 96-115 and 119-138; these read YVPA…FNFY and WGAL…IIAV.

The protein localises to the cell membrane. This is an uncharacterized protein from Bacillus subtilis (strain 168).